A 388-amino-acid polypeptide reads, in one-letter code: GTPase Obg (388 aa).

Residues 1 to 159 (MKFVDEAVIR…RSLKLELLLL (159 aa)) enclose the Obg domain. The OBG-type G domain maps to 160–333 (ADVGLLGMPN…LAAKLWDFIQ (174 aa)). GTP contacts are provided by residues 166 to 173 (GMPNAGKS), 191 to 195 (FTTLV), 213 to 216 (DIPG), 283 to 286 (NKAD), and 314 to 316 (SAY). The Mg(2+) site is built by Ser-173 and Thr-193.

This sequence belongs to the TRAFAC class OBG-HflX-like GTPase superfamily. OBG GTPase family. Monomer. It depends on Mg(2+) as a cofactor.

It localises to the cytoplasm. In terms of biological role, an essential GTPase which binds GTP, GDP and possibly (p)ppGpp with moderate affinity, with high nucleotide exchange rates and a fairly low GTP hydrolysis rate. Plays a role in control of the cell cycle, stress response, ribosome biogenesis and in those bacteria that undergo differentiation, in morphogenesis control. The chain is GTPase Obg from Shewanella oneidensis (strain ATCC 700550 / JCM 31522 / CIP 106686 / LMG 19005 / NCIMB 14063 / MR-1).